Here is a 2833-residue protein sequence, read N- to C-terminus: Reticulocyte-binding protein 1 (2833 aa).

A signal peptide spans 1 to 22 (MKRGICLAALLCLFNYLGAGHG). The span at 75-91 (ETDNASGKDAEGSRPSH) shows a compositional bias: basic and acidic residues. Disordered stretches follow at residues 75 to 95 (ETDNASGKDAEGSRPSHDSSF), 112 to 133 (HVKESTPHSTTRESTEKGKENE), and 819 to 860 (KHKQ…NFSR). Residues 819-836 (KHKQNRSEKEEEYFKNES) show a composition bias toward basic and acidic residues. Residues 837–849 (VEEDLSREETEEQ) show a composition bias toward acidic residues. The short motif at 2563–2565 (RGD) is the Cell attachment site element. Residues 2619–2755 (EMNSKKSAIE…GTYQDTSNSS (137 aa)) are disordered. Basic and acidic residues-rich tracts occupy residues 2621–2633 (NSKKSAIEKEKTA) and 2640–2652 (ENNRREEEERARV). Residues 2655 to 2670 (MSMNNDPTQSETTHSE) show a composition bias toward polar residues. Residues 2706–2720 (LEEEETTAPMEETEM) show a composition bias toward acidic residues. Positions 2731-2742 (TRSDEPDMHTEN) are enriched in basic and acidic residues. Polar residues predominate over residues 2743–2755 (TQDGTYQDTSNSS).

In terms of assembly, homodimer.

Its subcellular location is the membrane. Functionally, involved in reticulocyte adhesion. Specifically binds to human reticulocyte cells. In Plasmodium vivax (strain Belem), this protein is Reticulocyte-binding protein 1 (RBP1).